A 270-amino-acid polypeptide reads, in one-letter code: Hydroxyethylthiazole kinase (270 aa).

Residue methionine 47 participates in substrate binding. ATP contacts are provided by arginine 123 and serine 170. Glycine 197 provides a ligand contact to substrate.

Belongs to the Thz kinase family. Mg(2+) serves as cofactor.

It carries out the reaction 5-(2-hydroxyethyl)-4-methylthiazole + ATP = 4-methyl-5-(2-phosphooxyethyl)-thiazole + ADP + H(+). Its pathway is cofactor biosynthesis; thiamine diphosphate biosynthesis; 4-methyl-5-(2-phosphoethyl)-thiazole from 5-(2-hydroxyethyl)-4-methylthiazole: step 1/1. In terms of biological role, catalyzes the phosphorylation of the hydroxyl group of 4-methyl-5-beta-hydroxyethylthiazole (THZ). The protein is Hydroxyethylthiazole kinase of Syntrophus aciditrophicus (strain SB).